A 226-amino-acid chain; its full sequence is Thiopurine S-methyltransferase (226 aa).

Residues Trp10, Leu47, Glu68, and Arg130 each coordinate S-adenosyl-L-methionine.

The protein belongs to the class I-like SAM-binding methyltransferase superfamily. TPMT family.

It is found in the cytoplasm. The enzyme catalyses S-adenosyl-L-methionine + a thiopurine = S-adenosyl-L-homocysteine + a thiopurine S-methylether.. The polypeptide is Thiopurine S-methyltransferase (Shewanella sediminis (strain HAW-EB3)).